Here is a 754-residue protein sequence, read N- to C-terminus: 5-methyltetrahydropteroyltriglutamate--homocysteine methyltransferase (754 aa).

Residues 17 to 20 and K117 each bind 5-methyltetrahydropteroyltri-L-glutamate; that span reads RELK. L-homocysteine contacts are provided by residues 431-433 and E484; that span reads IGS. Residues 431–433 and E484 each bind L-methionine; that span reads IGS. Residues 515 to 516 and W561 each bind 5-methyltetrahydropteroyltri-L-glutamate; that span reads RC. D599 lines the L-homocysteine pocket. D599 is an L-methionine binding site. E605 lines the 5-methyltetrahydropteroyltri-L-glutamate pocket. Zn(2+) contacts are provided by H641, C643, and E665. The active-site Proton donor is the H694. C726 is a binding site for Zn(2+).

This sequence belongs to the vitamin-B12 independent methionine synthase family. It depends on Zn(2+) as a cofactor.

It carries out the reaction 5-methyltetrahydropteroyltri-L-glutamate + L-homocysteine = tetrahydropteroyltri-L-glutamate + L-methionine. Its pathway is amino-acid biosynthesis; L-methionine biosynthesis via de novo pathway; L-methionine from L-homocysteine (MetE route): step 1/1. Its function is as follows. Catalyzes the transfer of a methyl group from 5-methyltetrahydrofolate to homocysteine resulting in methionine formation. In Salmonella agona (strain SL483), this protein is 5-methyltetrahydropteroyltriglutamate--homocysteine methyltransferase.